Reading from the N-terminus, the 157-residue chain is Small ribosomal subunit protein uS7 (157 aa).

This sequence belongs to the universal ribosomal protein uS7 family. In terms of assembly, part of the 30S ribosomal subunit. Contacts proteins S9 and S11.

Functionally, one of the primary rRNA binding proteins, it binds directly to 16S rRNA where it nucleates assembly of the head domain of the 30S subunit. Is located at the subunit interface close to the decoding center, probably blocks exit of the E-site tRNA. This is Small ribosomal subunit protein uS7 from Roseiflexus sp. (strain RS-1).